The chain runs to 463 residues: tRNA-splicing endonuclease subunit Sen2 (463 aa).

A phosphoserine mark is found at Ser32 and Ser147. The segment at 120–213 (HDESTVQKIL…VASPSSLNGH (94 aa)) is disordered. Composition is skewed to basic and acidic residues over residues 139-149 (PYRERKGESPQ) and 159-170 (SSLEGREGKDEL). Residues Tyr367 and His375 contribute to the active site. 3 positions are modified to phosphoserine: Ser406, Ser409, and Ser413. Lys414 is an active-site residue.

It belongs to the tRNA-intron endonuclease family. As to quaternary structure, tRNA splicing endonuclease is a heterotetramer composed of TSEN2, TSEN15, TSEN34/LENG5 and TSEN54. tRNA splicing endonuclease complex also contains proteins of the pre-mRNA 3'-end processing machinery such as CLP1, CPSF1, CPSF4 and CSTF2.

It localises to the nucleus. The protein resides in the nucleolus. The enzyme catalyses pretRNA = a 3'-half-tRNA molecule with a 5'-OH end + a 5'-half-tRNA molecule with a 2',3'-cyclic phosphate end + an intron with a 2',3'-cyclic phosphate and a 5'-hydroxyl terminus.. Its function is as follows. Constitutes one of the two catalytic subunit of the tRNA-splicing endonuclease complex, a complex responsible for identification and cleavage of the splice sites in pre-tRNA. It cleaves pre-tRNA at the 5'- and 3'-splice sites to release the intron. The products are an intron and two tRNA half-molecules bearing 2',3'-cyclic phosphate and 5'-OH termini. There are no conserved sequences at the splice sites, but the intron is invariably located at the same site in the gene, placing the splice sites an invariant distance from the constant structural features of the tRNA body. Probably carries the active site for 5'-splice site cleavage. The tRNA splicing endonuclease is also involved in mRNA processing via its association with pre-mRNA 3'-end processing factors, establishing a link between pre-tRNA splicing and pre-mRNA 3'-end formation, suggesting that the endonuclease subunits function in multiple RNA-processing events. This Rattus norvegicus (Rat) protein is tRNA-splicing endonuclease subunit Sen2 (Tsen2).